Consider the following 97-residue polypeptide: Large ribosomal subunit protein uL23 (97 aa).

This sequence belongs to the universal ribosomal protein uL23 family. As to quaternary structure, part of the 50S ribosomal subunit. Contacts protein L29, and trigger factor when it is bound to the ribosome.

One of the early assembly proteins it binds 23S rRNA. One of the proteins that surrounds the polypeptide exit tunnel on the outside of the ribosome. Forms the main docking site for trigger factor binding to the ribosome. This Allorhizobium ampelinum (strain ATCC BAA-846 / DSM 112012 / S4) (Agrobacterium vitis (strain S4)) protein is Large ribosomal subunit protein uL23.